A 244-amino-acid polypeptide reads, in one-letter code: 5-oxoprolinase subunit A (244 aa).

It belongs to the LamB/PxpA family. Forms a complex composed of PxpA, PxpB and PxpC.

The enzyme catalyses 5-oxo-L-proline + ATP + 2 H2O = L-glutamate + ADP + phosphate + H(+). Functionally, catalyzes the cleavage of 5-oxoproline to form L-glutamate coupled to the hydrolysis of ATP to ADP and inorganic phosphate. In Escherichia coli O157:H7, this protein is 5-oxoprolinase subunit A.